A 500-amino-acid polypeptide reads, in one-letter code: Ribose import ATP-binding protein RbsA (500 aa).

2 ABC transporter domains span residues 3–239 and 246–493; these read IEMK…VGRE and DRTP…TGGV. 35 to 42 is a binding site for ATP; that stretch reads GENGAGKS.

The protein belongs to the ABC transporter superfamily. Ribose importer (TC 3.A.1.2.1) family. The complex is composed of an ATP-binding protein (RbsA), two transmembrane proteins (RbsC) and a solute-binding protein (RbsB).

The protein localises to the cell membrane. The enzyme catalyses D-ribose(out) + ATP + H2O = D-ribose(in) + ADP + phosphate + H(+). In terms of biological role, part of the ABC transporter complex RbsABC involved in ribose import. Responsible for energy coupling to the transport system. In Lacticaseibacillus paracasei (strain ATCC 334 / BCRC 17002 / CCUG 31169 / CIP 107868 / KCTC 3260 / NRRL B-441) (Lactobacillus paracasei), this protein is Ribose import ATP-binding protein RbsA.